A 299-amino-acid chain; its full sequence is Probable endonuclease 4 (299 aa).

Residues H68, H110, E145, D179, H182, H214, D227, H229, and E259 each contribute to the Zn(2+) site.

This sequence belongs to the AP endonuclease 2 family. The cofactor is Zn(2+).

The catalysed reaction is Endonucleolytic cleavage to 5'-phosphooligonucleotide end-products.. Endonuclease IV plays a role in DNA repair. It cleaves phosphodiester bonds at apurinic or apyrimidinic (AP) sites, generating a 3'-hydroxyl group and a 5'-terminal sugar phosphate. The protein is Probable endonuclease 4 of Exiguobacterium sibiricum (strain DSM 17290 / CCUG 55495 / CIP 109462 / JCM 13490 / 255-15).